The sequence spans 351 residues: Phospho-N-acetylmuramoyl-pentapeptide-transferase (351 aa).

10 consecutive transmembrane segments (helical) span residues 17 to 37, 62 to 82, 85 to 105, 124 to 144, 161 to 181, 190 to 210, 230 to 250, 254 to 274, 279 to 299, and 328 to 348; these read MAYA…HIIL, GIPT…LVFW, ILNV…FLGF, FKIY…YYFG, IDLG…ASNS, GLAI…AYLT, LVIF…FNAY, IMMG…AALI, ILFS…IIQV, and QVVI…LSTI.

Belongs to the glycosyltransferase 4 family. MraY subfamily. It depends on Mg(2+) as a cofactor.

It localises to the cell inner membrane. It carries out the reaction UDP-N-acetyl-alpha-D-muramoyl-L-alanyl-gamma-D-glutamyl-meso-2,6-diaminopimeloyl-D-alanyl-D-alanine + di-trans,octa-cis-undecaprenyl phosphate = di-trans,octa-cis-undecaprenyl diphospho-N-acetyl-alpha-D-muramoyl-L-alanyl-D-glutamyl-meso-2,6-diaminopimeloyl-D-alanyl-D-alanine + UMP. Its pathway is cell wall biogenesis; peptidoglycan biosynthesis. Functionally, catalyzes the initial step of the lipid cycle reactions in the biosynthesis of the cell wall peptidoglycan: transfers peptidoglycan precursor phospho-MurNAc-pentapeptide from UDP-MurNAc-pentapeptide onto the lipid carrier undecaprenyl phosphate, yielding undecaprenyl-pyrophosphoryl-MurNAc-pentapeptide, known as lipid I. This chain is Phospho-N-acetylmuramoyl-pentapeptide-transferase, found in Borrelia garinii subsp. bavariensis (strain ATCC BAA-2496 / DSM 23469 / PBi) (Borreliella bavariensis).